A 120-amino-acid polypeptide reads, in one-letter code: MITKAAKNATRKKRHARVRAKLTGTAERPRLNVYRSNQHIYAQVIDDVNGVTLVSASTLDKDLALNGTSNTEAATKVGESVAKRAVEKGVKEVVFDRGGYLYHGRVKALAEAAREAGLQF.

Residues 1–24 (MITKAAKNATRKKRHARVRAKLTG) are disordered. The segment covering 9–20 (ATRKKRHARVRA) has biased composition (basic residues).

The protein belongs to the universal ribosomal protein uL18 family. As to quaternary structure, part of the 50S ribosomal subunit; part of the 5S rRNA/L5/L18/L25 subcomplex. Contacts the 5S and 23S rRNAs.

This is one of the proteins that bind and probably mediate the attachment of the 5S RNA into the large ribosomal subunit, where it forms part of the central protuberance. The polypeptide is Large ribosomal subunit protein uL18 (Bacillus mycoides (strain KBAB4) (Bacillus weihenstephanensis)).